The following is a 55-amino-acid chain: Eclosion hormone (55 aa).

The protein belongs to the insect eclosion hormone family.

The protein resides in the secreted. Functionally, neuropeptide that triggers the performance of ecdysis behaviors at the end of a molt. It triggers adult behavior patterns: larval, pupal and adult ecdysis, and plasticization during the molt. In Romalea microptera (Eastern lubber grasshopper), this protein is Eclosion hormone.